Here is an 88-residue protein sequence, read N- to C-terminus: Small ribosomal subunit protein uS17 (88 aa).

Belongs to the universal ribosomal protein uS17 family. As to quaternary structure, part of the 30S ribosomal subunit.

One of the primary rRNA binding proteins, it binds specifically to the 5'-end of 16S ribosomal RNA. The protein is Small ribosomal subunit protein uS17 of Pseudomonas fluorescens (strain ATCC BAA-477 / NRRL B-23932 / Pf-5).